The sequence spans 169 residues: Zinc metalloproteinase-disintegrin-like mikarin (169 aa).

In terms of domain architecture, Peptidase M12B spans 14 to 57; it reads KYLEYVVVDNNMYRNYGNAGPCVMSAEISFEPLQEFSSCDIQEP. Residues 65–129 enclose the Disintegrin domain; that stretch reads PAVCGNYYVE…PEICTGRSAK (65 aa). Intrachain disulfides connect C68–C97, C79–C92, C81–C87, C105–C111, C110–C123, and C150–C161. The short motif at 116–118 is the D/ECD-tripeptide element; the sequence is DCD.

The protein belongs to the venom metalloproteinase (M12B) family. P-III subfamily. P-IIIa sub-subfamily. As to quaternary structure, monomer. The cofactor is Zn(2+). As to expression, expressed by the venom gland.

It is found in the secreted. Its activity is regulated as follows. Inhibited by EDTA, but not by PMSF. Its function is as follows. Snake venom zinc metalloproteinase that calcium-independently catalyzes the conversion of prothrombin (F2) to alpha-thrombin through the formation of a thrombin intermediate. The polypeptide is Zinc metalloproteinase-disintegrin-like mikarin (Micropechis ikaheca (New Guinean small-eyed snake)).